A 388-amino-acid polypeptide reads, in one-letter code: F-box protein At3g49510 (388 aa).

Residues 1–47 (MTTISDLSDDLVGDILSRVPFTSLISVRSTCKKWNALSKNQIFGRKT) form the F-box domain.

This Arabidopsis thaliana (Mouse-ear cress) protein is F-box protein At3g49510.